A 468-amino-acid chain; its full sequence is RUS family member 1 (468 aa).

Ala-2 bears the N-acetylalanine mark. Thr-49 carries the phosphothreonine modification. Residues 247 to 267 traverse the membrane as a helical segment; it reads LLMLPLVSGCPGFSLGCFFFL.

Belongs to the RUS1 family.

It is found in the membrane. The sequence is that of RUS family member 1 from Homo sapiens (Human).